The following is a 484-amino-acid chain: AMP nucleosidase (484 aa).

Belongs to the AMP nucleosidase family.

It catalyses the reaction AMP + H2O = adenine + D-ribose 5-phosphate. In terms of biological role, catalyzes the hydrolysis of the N-glycosidic bond of AMP to form adenine and ribose 5-phosphate. Involved in regulation of AMP concentrations. This chain is AMP nucleosidase, found in Escherichia coli O157:H7.